A 172-amino-acid polypeptide reads, in one-letter code: Large ribosomal subunit protein uL10 (172 aa).

This sequence belongs to the universal ribosomal protein uL10 family. As to quaternary structure, part of the ribosomal stalk of the 50S ribosomal subunit. The N-terminus interacts with L11 and the large rRNA to form the base of the stalk. The C-terminus forms an elongated spine to which L12 dimers bind in a sequential fashion forming a multimeric L10(L12)X complex.

Forms part of the ribosomal stalk, playing a central role in the interaction of the ribosome with GTP-bound translation factors. This chain is Large ribosomal subunit protein uL10, found in Bartonella bacilliformis (strain ATCC 35685 / KC583 / Herrer 020/F12,63).